The primary structure comprises 591 residues: Paxillin (591 aa).

Met1 is modified (N-acetylmethionine). Asp2 bears the N-acetylserine mark. The short motif at 3 to 15 is the LD motif 1 element; the sequence is DLDALLADLESTT. The disordered stretch occupies residues 17-138; it reads HISKRPVFLS…PSPTVMSTSL (122 aa). Tyr31 is subject to Phosphotyrosine; by PTK6. Over residues 45-54 the composition is skewed to pro residues; the sequence is VPPPVPPPPS. Polar residues predominate over residues 69-106; sequence WQPSSSRFIHQQPQSSSPVYGSSAKTSSVSNPQDSVGS. Phosphoserine occurs at positions 83 and 85. Position 88 is a phosphotyrosine (Tyr88). Ser106 is subject to Phosphoserine. Tyr118 carries the post-translational modification Phosphotyrosine; by PTK6. 3 positions are modified to phosphoserine: Ser119, Ser126, and Ser130. Positions 121 to 137 are enriched in polar residues; the sequence is PNKQKSAEPSPTVMSTS. A Phosphothreonine modification is found at Thr132. 3 positions are modified to phosphoserine: Ser137, Ser140, and Ser143. An LD motif 2 motif is present at residues 144-156; the sequence is ELDRLLLELNAVQ. The segment at 159–260 is disordered; sequence PPGFPADEAN…TQQQTRISAS (102 aa). Tyr181 carries the post-translational modification Phosphotyrosine. An LD motif 3 motif is present at residues 216–228; that stretch reads SVESLLDELESSV. Ser230 is modified (phosphoserine). Over residues 236–260 the composition is skewed to polar residues; the sequence is TVNQGEMSSPQRVTSTQQQTRISAS. The residue at position 244 (Ser244) is a Phosphoserine; by CDK5. Residue Ser250 is modified to Phosphoserine; by SLK. 7 positions are modified to phosphoserine: Ser258, Ser261, Ser272, Ser303, Ser322, Ser332, and Ser340. The tract at residues 262-315 is required for binding to PARVA and ILK; the sequence is ATRELDELMASLSDFKIQGLEQRADGERCWAAGWPRDGGRSSPGGQDEGGFMAQ. The LD motif 4 signature appears at 265–276; sequence ELDELMASLSDF. The segment at 291-335 is disordered; sequence WAAGWPRDGGRSSPGGQDEGGFMAQGKTGSSSPPGGPPKPGSQLD. Positions 333–345 match the LD motif 5 motif; sequence QLDSMLGSLQSDL. 4 LIM zinc-binding domains span residues 356-415, 416-473, 474-533, and 534-591; these read GVCG…LFSP, RCYY…DMFA, PKCG…RRGS, and LCSG…KLFC. Ser533 carries the post-translational modification Phosphoserine.

This sequence belongs to the paxillin family. Interacts in vitro with VCL/vinculin as well as to the SH3 domain of SRC and, when tyrosine phosphorylated, to the SH2 domain of CRK. Interacts with GIT1. Interacts with NUDT16L1/SDOS. Interacts with PTK2/FAK1. Interacts with PTK2B/PYK2. Interacts with ASAP2. Interacts with unphosphorylated ITGA4. Interacts with RNF5. Interacts with PDCD10. Interacts with NEK3, the interaction is prolactin-dependent. Interacts with PTK6. Interacts with TGFB1I1. Interacts with SORBS1. Interacts with PARVB. Interacts (via LD motif 4) with PARVA/PARVIN. Interacts (via LD motif 4) with ILK. Interacts (via cytoplasmic domain) with CEACAM1; the interaction is phosphotyrosyl-dependent. Interacts with LIMA1; this complex stabilizes actin dynamics. Interacts with CD36 (via C-terminus). Interacts with TRIM15. Interacts with PAK4; PAK4 acts as a scaffold to suppport PAXI phosphorylation at Ser-272. As to quaternary structure, interacts strongly with PTK2/FAK1 and weakly with VCL/vinculin. In terms of assembly, interacts strongly with VCL/vinculin but only weakly with PTK2/FAK1. Phosphorylated by MAPK1/ERK2. Phosphorylated on tyrosine residues during integrin-mediated cell adhesion, embryonic development, fibroblast transformation and following stimulation of cells by mitogens. Phosphorylation at Ser-244 by CDK5 reduces its interaction with PTK2/FAK1 in matrix-cell focal adhesions (MCFA) during oligodendrocytes (OLs) differentiation. Phosphorylation at Tyr-31 and Tyr-118 by PTK6 promote the activation of RAC1 via CRK/CrKII, thereby promoting migration and invasion. Phosphorylation at Ser-250 by SLK is required for PXN redistribution and cell motility. Phosphorylation at Ser-272 promotes focal adhesion disassembly during cell migration.

It localises to the cytoplasm. Its subcellular location is the cytoskeleton. It is found in the cell junction. The protein resides in the focal adhesion. The protein localises to the cell cortex. Cytoskeletal protein involved in actin-membrane attachment at sites of cell adhesion to the extracellular matrix (focal adhesion). Recruits other proteins such as TRIM15 to focal adhesion. This is Paxillin from Homo sapiens (Human).